Reading from the N-terminus, the 85-residue chain is Transcriptional repressor protein KorC (85 aa).

A DNA-binding region (H-T-H motif) is located at residues 28-47 (VLHLAGLTGGQAARILGLGA).

In terms of biological role, acts with KorA as corepressor in the control of the kilC and kilE operons. The polypeptide is Transcriptional repressor protein KorC (korC) (Escherichia coli).